A 407-amino-acid chain; its full sequence is Carbamoyl phosphate synthase small chain (407 aa).

The CPSase stretch occupies residues 1 to 205; the sequence is MTETTPKTAP…LQDGYGEQDA (205 aa). Ser-60, Gly-257, and Gly-259 together coordinate L-glutamine. The region spanning 209–397 is the Glutamine amidotransferase type-1 domain; that stretch reads HVVALDFGVK…INLIRERKGQ (189 aa). Catalysis depends on Cys-286, which acts as the Nucleophile. The L-glutamine site is built by Leu-287, Gln-290, Asn-328, Gly-330, and Phe-331. Catalysis depends on residues His-370 and Glu-372.

Belongs to the CarA family. Composed of two chains; the small (or glutamine) chain promotes the hydrolysis of glutamine to ammonia, which is used by the large (or ammonia) chain to synthesize carbamoyl phosphate. Tetramer of heterodimers (alpha,beta)4.

It carries out the reaction hydrogencarbonate + L-glutamine + 2 ATP + H2O = carbamoyl phosphate + L-glutamate + 2 ADP + phosphate + 2 H(+). The catalysed reaction is L-glutamine + H2O = L-glutamate + NH4(+). It participates in amino-acid biosynthesis; L-arginine biosynthesis; carbamoyl phosphate from bicarbonate: step 1/1. Its pathway is pyrimidine metabolism; UMP biosynthesis via de novo pathway; (S)-dihydroorotate from bicarbonate: step 1/3. Functionally, small subunit of the glutamine-dependent carbamoyl phosphate synthetase (CPSase). CPSase catalyzes the formation of carbamoyl phosphate from the ammonia moiety of glutamine, carbonate, and phosphate donated by ATP, constituting the first step of 2 biosynthetic pathways, one leading to arginine and/or urea and the other to pyrimidine nucleotides. The small subunit (glutamine amidotransferase) binds and cleaves glutamine to supply the large subunit with the substrate ammonia. The protein is Carbamoyl phosphate synthase small chain of Brucella abortus (strain S19).